The primary structure comprises 790 residues: MRTYRYFLLLFWVGQPYPTFSNPLSKRTSGFPAKRKALELSANSRNELSRSKRSWMWNQFFLLEEYTGSDYQYVGKLHSDQDRGDGSLKYILSGDGAGDLFIINENTGDIQATKRLDREEKPVYILRAQAVNRRTGRPVEPESEFIIKIHDINDNEPIFTKDVYTATVPEMADVGTFVVQVTATDADDPTYGNSAKVVYSILQGQPYFSVESETGIIKTALLNMDRENREQYQVVIQAKDMGGQMGGLSGTTTVNITLTDVNDNPPRFPQSTYQFKTPESSPPGTPIGRIKASDADVGENAEIEYSITDGEGHEMFDVITDQETQEGIITVKKLLDFEKKKVYTLKVEASNPHVEPRFLYLGPFKDSATVRIVVDDVDEPPVFSKLAYILQIREDARINTTIGSVAAQDPDAARNPVKYSVDRHTDMDRIFNIDSGNGSIFTSKLLDRETLLWHNITVIATEINNPKQSSRVPLYIKVLDVNDNAPEFAEFYETFVCEKAKADQLIQTLRAVDKDDPYSGHQFSFSLAPEAASSSNFTIQDNKDNTAGILTRKNGYNRHEMSTYLLPVVISDNDYPVQSSTGTVTVRVCACDHHGNMQSCHAEALIHPTGLSTGALVAILLCIVILLVTVVLFAALRRQRKKEPLIISKEDIRDNIVSYNDEGGGEEDTQAFDIGTLRNPEAMEDSKSRRDIVPEALFLPRRTPTARDNTDVRDFINQRLKENDTDPTAPPYDSLATYAYEGTGSVADSLSSLESVTTDGDQDYDYLSDWGPRFKKLADMYGGMDSDKDS.

The first 18 residues, Met1–Pro18, serve as a signal peptide directing secretion. Positions Thr19–Arg53 are excised as a propeptide. Cadherin domains lie at Ser54–Phe159, Thr160–Phe268, Pro269–Phe383, Ser384–Pro486, and Glu487–Pro608. Over Ser54–Ala615 the chain is Extracellular. Asn255 carries an N-linked (GlcNAc...) asparagine glycan. Residues Asp260–Lys291 form a disordered region. Residues Pro269–Glu279 are compositionally biased toward polar residues. Residues Asn399, Asn437, Asn455, and Asn536 are each glycosylated (N-linked (GlcNAc...) asparagine). Residues Leu616 to Leu636 traverse the membrane as a helical segment. Residues Arg637 to Ser790 lie on the Cytoplasmic side of the membrane. Phosphoserine occurs at positions 786 and 790.

It is found in the cell membrane. Cadherins are calcium-dependent cell adhesion proteins. They preferentially interact with themselves in a homophilic manner in connecting cells; cadherins may thus contribute to the sorting of heterogeneous cell types. The chain is Cadherin-6 (Cdh6) from Mus musculus (Mouse).